A 270-amino-acid polypeptide reads, in one-letter code: Electron transfer flavoprotein subunit beta (270 aa).

This sequence belongs to the ETF alpha-subunit/FixB family. Heterodimer of an alpha and a beta subunit. Requires FAD as cofactor.

The electron transfer flavoprotein serves as a specific electron acceptor for other dehydrogenases. It transfers the electrons to the main respiratory chain via ETF-ubiquinone oxidoreductase (ETF dehydrogenase). This is Electron transfer flavoprotein subunit beta (etfB) from Megasphaera elsdenii.